A 338-amino-acid chain; its full sequence is D-xylulose reductase (338 aa).

Zn(2+) contacts are provided by Cys40, His65, and Glu151.

Belongs to the zinc-containing alcohol dehydrogenase family. In terms of assembly, homotetramer. The cofactor is Zn(2+).

It carries out the reaction xylitol + NAD(+) = D-xylulose + NADH + H(+). This chain is D-xylulose reductase, found in Morganella morganii (Proteus morganii).